The chain runs to 119 residues: Small ribosomal subunit protein uS13 (119 aa).

The disordered stretch occupies residues 92 to 119 (RRGLPVRGQRTKTNARTRKGPRKAIRAR).

It belongs to the universal ribosomal protein uS13 family. Part of the 30S ribosomal subunit. Forms a loose heterodimer with protein S19. Forms two bridges to the 50S subunit in the 70S ribosome.

Located at the top of the head of the 30S subunit, it contacts several helices of the 16S rRNA. In the 70S ribosome it contacts the 23S rRNA (bridge B1a) and protein L5 of the 50S subunit (bridge B1b), connecting the 2 subunits; these bridges are implicated in subunit movement. Contacts the tRNAs in the A and P-sites. The sequence is that of Small ribosomal subunit protein uS13 from Nitrosomonas eutropha (strain DSM 101675 / C91 / Nm57).